The sequence spans 278 residues: Diaminopimelate epimerase (278 aa).

Substrate is bound by residues asparagine 11 and asparagine 75. Catalysis depends on cysteine 84, which acts as the Proton donor. Substrate contacts are provided by residues 85–86 (GN), asparagine 160, asparagine 195, and 213–214 (ER). Cysteine 222 acts as the Proton acceptor in catalysis. 223–224 (GT) is a substrate binding site.

The protein belongs to the diaminopimelate epimerase family. Homodimer.

The protein resides in the cytoplasm. It catalyses the reaction (2S,6S)-2,6-diaminopimelate = meso-2,6-diaminopimelate. Its pathway is amino-acid biosynthesis; L-lysine biosynthesis via DAP pathway; DL-2,6-diaminopimelate from LL-2,6-diaminopimelate: step 1/1. In terms of biological role, catalyzes the stereoinversion of LL-2,6-diaminopimelate (L,L-DAP) to meso-diaminopimelate (meso-DAP), a precursor of L-lysine and an essential component of the bacterial peptidoglycan. In Corynebacterium aurimucosum (strain ATCC 700975 / DSM 44827 / CIP 107346 / CN-1) (Corynebacterium nigricans), this protein is Diaminopimelate epimerase.